Reading from the N-terminus, the 212-residue chain is Cyclin-dependent kinase inhibitor 3 (212 aa).

Polar residues predominate over residues 1–12; that stretch reads MKPPSSIQTSEF. The disordered stretch occupies residues 1–23; the sequence is MKPPSSIQTSEFDSSDEEPIEDE. The interval 1-34 is interaction with CDK2; that stretch reads MKPPSSIQTSEFDSSDEEPIEDEQTPIQISWLPL. Over residues 13–23 the composition is skewed to acidic residues; sequence DSSDEEPIEDE. Residues 32–201 enclose the Tyrosine-protein phosphatase domain; the sequence is LPLSRVNYSQ…FRDKLAAHLS (170 aa). C140 (phosphocysteine intermediate) is an active-site residue.

The protein belongs to the protein-tyrosine phosphatase family. In terms of assembly, interacts with cyclin-dependent kinases such as CDK1, CDK2 and CDK3. Does not interact with CDK4. Interacts (via C-terminus) with phosphorylated CDK2 (via C-terminal helix). Interacts with MS4A3 (via C-terminus); the interaction enhances CDKN3 enzymatic activity.

Its subcellular location is the cytoplasm. It is found in the perinuclear region. It carries out the reaction O-phospho-L-tyrosyl-[protein] + H2O = L-tyrosyl-[protein] + phosphate. The enzyme catalyses O-phospho-L-seryl-[protein] + H2O = L-seryl-[protein] + phosphate. The catalysed reaction is O-phospho-L-threonyl-[protein] + H2O = L-threonyl-[protein] + phosphate. May play a role in cell cycle regulation. Dual specificity phosphatase active toward substrates containing either phosphotyrosine or phosphoserine residues. Dephosphorylates CDK2 at 'Thr-160' in a cyclin-dependent manner. The protein is Cyclin-dependent kinase inhibitor 3 of Sus scrofa (Pig).